A 249-amino-acid chain; its full sequence is Aquaporin (249 aa).

Over 1–11 the chain is Cytoplasmic; the sequence is MTRKWIKKLQS. A helical transmembrane segment spans residues 12 to 32; the sequence is YIGEFFASFIFGFAVYTSIIG. Residues 33 to 39 are Extracellular-facing; that stretch reads SAQTGQS. A helical membrane pass occupies residues 40–60; it reads AGPIIVALTIALSGVAIIYSF. At 61–83 the chain is on the cytoplasmic side; it reads CDITVAHFNPAITFSAMCFRRLP. The NPA motif lies at 69–71; the sequence is NPA. Residues 84-104 form a helical membrane-spanning segment; the sequence is FFGGIFIIIFQVAGFIIAGLA. The Extracellular segment spans residues 105-133; that stretch reads SVAVLPGKYKNKLEIARPKRVADNVSRGR. The chain crosses the membrane as a helical span at residues 134–154; the sequence is IFGTEFFLTAILVYVAFAVGV. The Cytoplasmic segment spans residues 155 to 179; the sequence is NPYTPPKDEHGDQLDPDEGLTEGRK. A helical transmembrane segment spans residues 180–200; the sequence is ITAPLAIGFTLGFCALLGIAS. Residues 201-223 lie on the Extracellular side of the membrane; it reads SGGAFNPGIVLSPMILTGTWDFW. An NPG motif is present at residues 206-208; the sequence is NPG. Residues 224–246 form a helical membrane-spanning segment; it reads WVYLLGQFSGGLLGGGLQRFLLY. Topologically, residues 247-249 are cytoplasmic; it reads KIF.

This sequence belongs to the MIP/aquaporin (TC 1.A.8) family.

Its subcellular location is the cell membrane. Functionally, water channel required to facilitate the transport of water across membranes. Involved in osmotolerance. The sequence is that of Aquaporin (AQP) from Vairimorpha ceranae (strain BRL01) (Microsporidian parasite).